The sequence spans 280 residues: Endochitinase A (280 aa).

The first 25 residues, 1–25 (MANAPRILALGLLALLCAAAGPAAA), serve as a signal peptide directing secretion. The Chitin-binding type-1 domain maps to 26-60 (QNCGCQPNFCCSKFGYCGTTDAYCGDGCQSGPCRS). 4 disulfides stabilise this stretch: C28–C36, C30–C42, C35–C49, and C53–C58. Residues 61 to 77 (GGGGGGGGGGGGGGSGG) form a hinge region (poly-Gly) region. The tract at residues 78-280 (ANVANVVTDA…RVDPGPNLTC (203 aa)) is catalytic. C100 and C149 form a disulfide bridge. E144 functions as the Proton donor in the catalytic mechanism. An N-linked (GlcNAc...) asparagine glycan is attached at N155. Disulfide bonds link C161-C170 and C248-C280. N-linked (GlcNAc...) asparagine glycosylation is present at N277.

It belongs to the glycosyl hydrolase 19 family. Chitinase class IV subfamily.

It localises to the secreted. The catalysed reaction is Random endo-hydrolysis of N-acetyl-beta-D-glucosaminide (1-&gt;4)-beta-linkages in chitin and chitodextrins.. With respect to regulation, inactivated by l-ethyl-3-(3-dimethylaminopropyl)carbodiimide (EDC) in the absence of exogenous nucleophiles (e.g. GlcNAc4, GlcNAc3 and GlcNAc2). Not inhibited by tetra-N-acetylchitopentaose or modified chitotetraose substrate TMG-chitotriomycin-pMP, containing a free, non-acetylated glucosaminyl residue or a N-trimethylamino glucosamine (TMG) residue at the non-reducing terminus, respectively. In terms of biological role, defense against chitin-containing fungal pathogens. Hydrolyzes glycol chitin and tetra-N-acetylchitotetraose in vitro. Its action is countered by fungal polyglycine hydrolases and fungalysin, that cleave the chitin-binding domain from the protein. This is Endochitinase A from Zea mays (Maize).